Reading from the N-terminus, the 302-residue chain is Olfactory receptor 51H1 (302 aa).

Over 1–27 (MTNLNASQANHRNFILTGIPGTPDKNP) the chain is Extracellular. An N-linked (GlcNAc...) asparagine glycan is attached at N5. The helical transmembrane segment at 28–48 (WLAFPLGFLYTLTLLGNGTIL) threads the bilayer. The Cytoplasmic portion of the chain corresponds to 49-56 (AVIKVEPS). A helical membrane pass occupies residues 57–77 (LHEPTYYFLSILALTDVSLSM). Residues 78-101 (STLPSMLSIYWFNAPQIVFDACIM) are Extracellular-facing. Cysteines 99 and 191 form a disulfide. A helical transmembrane segment spans residues 102 to 122 (QMFFIHVFGIVESGVLVSMAF). Topologically, residues 123–141 (DRFVAIRNPLHYVSILTHD) are cytoplasmic. A helical membrane pass occupies residues 142–162 (VIRKTGIAVLTRAVCVVFPVP). Topologically, residues 163–198 (FLIKCLPFCHSNVLSHSYCLHQNMMRLACASTRINS) are extracellular. A helical membrane pass occupies residues 199-219 (LYGLIVVIFTLGLDVLLTLLS). The Cytoplasmic segment spans residues 220 to 239 (YVLTLKTVLGIVSRGERLKT). Residues 240–260 (LSTCLSHMSTVLLFYVPFMGA) form a helical membrane-spanning segment. At 261–276 (ASMIHRFWEHLSPVVH) the chain is on the extracellular side. Residues 277-297 (MVMADIYLLLPPVLNPIVYSV) form a helical membrane-spanning segment. The Cytoplasmic segment spans residues 298–302 (KTKQI).

The protein belongs to the G-protein coupled receptor 1 family.

The protein resides in the cell membrane. Functionally, odorant receptor. The sequence is that of Olfactory receptor 51H1 (OR51H1) from Homo sapiens (Human).